A 156-amino-acid polypeptide reads, in one-letter code: 6,7-dimethyl-8-ribityllumazine synthase (156 aa).

Residues Phe22, 56–58 (AME), and 80–82 (AVI) each bind 5-amino-6-(D-ribitylamino)uracil. 85–86 (ET) contacts (2S)-2-hydroxy-3-oxobutyl phosphate. His88 serves as the catalytic Proton donor. Residue Phe113 participates in 5-amino-6-(D-ribitylamino)uracil binding. Residue Arg127 coordinates (2S)-2-hydroxy-3-oxobutyl phosphate.

It belongs to the DMRL synthase family.

It carries out the reaction (2S)-2-hydroxy-3-oxobutyl phosphate + 5-amino-6-(D-ribitylamino)uracil = 6,7-dimethyl-8-(1-D-ribityl)lumazine + phosphate + 2 H2O + H(+). The protein operates within cofactor biosynthesis; riboflavin biosynthesis; riboflavin from 2-hydroxy-3-oxobutyl phosphate and 5-amino-6-(D-ribitylamino)uracil: step 1/2. Its function is as follows. Catalyzes the formation of 6,7-dimethyl-8-ribityllumazine by condensation of 5-amino-6-(D-ribitylamino)uracil with 3,4-dihydroxy-2-butanone 4-phosphate. This is the penultimate step in the biosynthesis of riboflavin. In Kosmotoga olearia (strain ATCC BAA-1733 / DSM 21960 / TBF 19.5.1), this protein is 6,7-dimethyl-8-ribityllumazine synthase.